A 264-amino-acid chain; its full sequence is 3-methyl-2-oxobutanoate hydroxymethyltransferase (264 aa).

Positions 45 and 84 each coordinate Mg(2+). 3-methyl-2-oxobutanoate-binding positions include 45 to 46 (DS), Asp-84, and Lys-112. Residue Glu-114 coordinates Mg(2+). Glu-181 (proton acceptor) is an active-site residue.

The protein belongs to the PanB family. As to quaternary structure, homodecamer; pentamer of dimers. Mg(2+) serves as cofactor.

Its subcellular location is the cytoplasm. It carries out the reaction 3-methyl-2-oxobutanoate + (6R)-5,10-methylene-5,6,7,8-tetrahydrofolate + H2O = 2-dehydropantoate + (6S)-5,6,7,8-tetrahydrofolate. It functions in the pathway cofactor biosynthesis; (R)-pantothenate biosynthesis; (R)-pantoate from 3-methyl-2-oxobutanoate: step 1/2. Catalyzes the reversible reaction in which hydroxymethyl group from 5,10-methylenetetrahydrofolate is transferred onto alpha-ketoisovalerate to form ketopantoate. The sequence is that of 3-methyl-2-oxobutanoate hydroxymethyltransferase from Escherichia coli O17:K52:H18 (strain UMN026 / ExPEC).